The sequence spans 176 residues: 3-hydroxydecanoyl-[acyl-carrier-protein] dehydratase (176 aa).

Residue His71 is part of the active site.

This sequence belongs to the thioester dehydratase family. FabA subfamily. Homodimer.

The protein localises to the cytoplasm. It catalyses the reaction a (3R)-hydroxyacyl-[ACP] = a (2E)-enoyl-[ACP] + H2O. The catalysed reaction is (3R)-hydroxydecanoyl-[ACP] = (2E)-decenoyl-[ACP] + H2O. The enzyme catalyses (2E)-decenoyl-[ACP] = (3Z)-decenoyl-[ACP]. The protein operates within lipid metabolism; fatty acid biosynthesis. Functionally, necessary for the introduction of cis unsaturation into fatty acids. Catalyzes the dehydration of (3R)-3-hydroxydecanoyl-ACP to E-(2)-decenoyl-ACP and then its isomerization to Z-(3)-decenoyl-ACP. Can catalyze the dehydratase reaction for beta-hydroxyacyl-ACPs with saturated chain lengths up to 16:0, being most active on intermediate chain length. This is 3-hydroxydecanoyl-[acyl-carrier-protein] dehydratase from Rhodopseudomonas palustris (strain HaA2).